The following is a 332-amino-acid chain: Methionine synthase (332 aa).

The Zn(2+) site is built by histidine 211, cysteine 213, and cysteine 296.

The protein belongs to the archaeal MetE family. Zn(2+) is required as a cofactor.

It functions in the pathway amino-acid biosynthesis; L-methionine biosynthesis via de novo pathway. In terms of biological role, catalyzes the transfer of a methyl group to L-homocysteine resulting in methionine formation. The physiological methyl donor is unknown. The sequence is that of Methionine synthase from Saccharolobus islandicus (strain Y.G.57.14 / Yellowstone #1) (Sulfolobus islandicus).